The following is a 194-amino-acid chain: Peptidyl-tRNA hydrolase (194 aa).

Tyrosine 17 is a tRNA binding site. Histidine 22 serves as the catalytic Proton acceptor. Residues phenylalanine 68, asparagine 70, and asparagine 116 each contribute to the tRNA site.

It belongs to the PTH family. Monomer.

It localises to the cytoplasm. The catalysed reaction is an N-acyl-L-alpha-aminoacyl-tRNA + H2O = an N-acyl-L-amino acid + a tRNA + H(+). Functionally, hydrolyzes ribosome-free peptidyl-tRNAs (with 1 or more amino acids incorporated), which drop off the ribosome during protein synthesis, or as a result of ribosome stalling. Catalyzes the release of premature peptidyl moieties from peptidyl-tRNA molecules trapped in stalled 50S ribosomal subunits, and thus maintains levels of free tRNAs and 50S ribosomes. The protein is Peptidyl-tRNA hydrolase of Histophilus somni (strain 2336) (Haemophilus somnus).